We begin with the raw amino-acid sequence, 30 residues long: Cyclotide cter-H (30 aa).

The cyclopeptide (Gly-Asp) cross-link spans 1–30 (GLPCGESCVFIPCITTVVGCSCKNKVCYND). Disulfide bonds link Cys-4/Cys-20, Cys-8/Cys-22, and Cys-13/Cys-27.

In terms of processing, contains 3 disulfide bonds. Post-translationally, this is a cyclic peptide.

Its function is as follows. Probably participates in a plant defense mechanism. This chain is Cyclotide cter-H, found in Clitoria ternatea (Butterfly pea).